Here is a 529-residue protein sequence, read N- to C-terminus: Tyrosinase (529 aa).

A signal peptide spans 1-18; that stretch reads MLLAVLYCLLWSFQTSAG. Over 19-476 the chain is Lumenal, melanosome; that stretch reads HFPRACVSSK…YLEQASRIWS (458 aa). Asn-86, Asn-111, and Asn-161 each carry an N-linked (GlcNAc...) asparagine glycan. Residues His-180, His-202, and His-211 each coordinate Cu cation. Asn-230 carries N-linked (GlcNAc...) asparagine glycosylation. Positions 287–313 are disordered; it reads SLCNGTPEGPLQRNPGNHDKSRTPRLP. N-linked (GlcNAc...) asparagine glycosylation occurs at Asn-337. Cu cation contacts are provided by His-363 and His-367. Asn-371 is a glycosylation site (N-linked (GlcNAc...) asparagine). His-390 contributes to the Cu cation binding site. Residues 477 to 497 form a helical membrane-spanning segment; it reads WLLGAAMVGAVLTALLAGLVS. The Cytoplasmic segment spans residues 498–529; that stretch reads LLCRHKRKQLPEEKQPLLMEKEDYHSLYQSHL.

Belongs to the tyrosinase family. Forms an OPN3-dependent complex with DCT in response to blue light in melanocytes. Cu(2+) is required as a cofactor. Post-translationally, glycosylated.

The protein resides in the melanosome membrane. It localises to the melanosome. The enzyme catalyses 2 L-dopa + O2 = 2 L-dopaquinone + 2 H2O. It catalyses the reaction L-tyrosine + O2 = L-dopaquinone + H2O. The catalysed reaction is 2 5,6-dihydroxyindole-2-carboxylate + O2 = 2 indole-5,6-quinone-2-carboxylate + 2 H2O. In terms of biological role, this is a copper-containing oxidase that functions in the formation of pigments such as melanins and other polyphenolic compounds. Catalyzes the initial and rate limiting step in the cascade of reactions leading to melanin production from tyrosine. In addition to hydroxylating tyrosine to DOPA (3,4-dihydroxyphenylalanine), also catalyzes the oxidation of DOPA to DOPA-quinone, and possibly the oxidation of DHI (5,6-dihydroxyindole) to indole-5,6 quinone. The polypeptide is Tyrosinase (TYR) (Gorilla gorilla gorilla (Western lowland gorilla)).